A 347-amino-acid chain; its full sequence is DNA-directed RNA polymerase subunit alpha (347 aa).

The alpha N-terminal domain (alpha-NTD) stretch occupies residues 1–226; that stretch reads MLISQRPTLS…ELFGLARELN (226 aa). Positions 243-347 are alpha C-terminal domain (alpha-CTD); that stretch reads HIASFALPID…SQDYAETEQL (105 aa). Residues 326–347 are disordered; the sequence is TTGTWSTDGAYDSQDYAETEQL.

Belongs to the RNA polymerase alpha chain family. As to quaternary structure, homodimer. The RNAP catalytic core consists of 2 alpha, 1 beta, 1 beta' and 1 omega subunit. When a sigma factor is associated with the core the holoenzyme is formed, which can initiate transcription.

The enzyme catalyses RNA(n) + a ribonucleoside 5'-triphosphate = RNA(n+1) + diphosphate. Its function is as follows. DNA-dependent RNA polymerase catalyzes the transcription of DNA into RNA using the four ribonucleoside triphosphates as substrates. The chain is DNA-directed RNA polymerase subunit alpha from Mycobacterium leprae (strain TN).